Consider the following 676-residue polypeptide: XK-related protein 5 (676 aa).

The next 7 helical transmembrane spans lie at 37–57, 114–134, 140–160, 206–226, 239–259, 266–286, and 294–314; these read WLAL…FLWF, LLEA…VFLA, IVPG…LVSY, VWVL…LVAQ, LFNL…WDSP, SFYL…TDFL, and LWTV…LVIY. Disordered regions lie at residues 336–362, 372–391, 495–538, and 598–661; these read PIED…DSSS, TSLD…GLGE, LEDN…KEGQ, and PIPG…IQRD. Polar residues predominate over residues 498-509; that stretch reads NATTQKPPATQE.

Belongs to the XK family.

The protein resides in the cell membrane. This chain is XK-related protein 5, found in Mus musculus (Mouse).